The sequence spans 749 residues: Catalase-peroxidase (749 aa).

The segment covering 1–12 (MSSDTSDTRPPH) has biased composition (basic and acidic residues). Residues 1-40 (MSSDTSDTRPPHSDSGTQSNSESENPIIDSPEPKAHAPLT) are disordered. The segment covering 14-24 (DSGTQSNSESE) has biased composition (polar residues). Residues 113 to 240 (WHAAGTYRIF…FGATTMGLIY (128 aa)) constitute a cross-link (tryptophyl-tyrosyl-methioninium (Trp-Tyr) (with M-266)). The active-site Proton acceptor is H114. The tryptophyl-tyrosyl-methioninium (Tyr-Met) (with W-113) cross-link spans 240 to 266 (YVNPEGPEGKPDPLAAAHDIRETFGRM). Residue H281 coordinates heme b.

The protein belongs to the peroxidase family. Peroxidase/catalase subfamily. As to quaternary structure, homodimer or homotetramer. Heme b serves as cofactor. Post-translationally, formation of the three residue Trp-Tyr-Met cross-link is important for the catalase, but not the peroxidase activity of the enzyme.

It catalyses the reaction H2O2 + AH2 = A + 2 H2O. The enzyme catalyses 2 H2O2 = O2 + 2 H2O. In terms of biological role, bifunctional enzyme with both catalase and broad-spectrum peroxidase activity. This Mycobacterium sp. (strain JLS) protein is Catalase-peroxidase.